Consider the following 205-residue polypeptide: Meiotic nuclear division protein 1 homolog (205 aa).

N-acetylserine is present on S2. A coiled-coil region spans residues 84 to 173 (HKLEVLESQL…EAANRWTDNI (90 aa)).

This sequence belongs to the MND1 family. As to quaternary structure, heterodimer with PSMC3IP/HOP2. MND1-PSMC3IP interacts with DMC1 and RAD51 and binds preferentially to dsDNA.

Its subcellular location is the nucleus. Its function is as follows. Required for proper homologous chromosome pairing and efficient cross-over and intragenic recombination during meiosis. Stimulates both DMC1- and RAD51-mediated homologous strand assimilation, which is required for the resolution of meiotic double-strand breaks. This chain is Meiotic nuclear division protein 1 homolog, found in Homo sapiens (Human).